The sequence spans 343 residues: Cyclin-Y-like protein 1 (343 aa).

The interval 1 to 48 is disordered; it reads MGNTVTCCVSPDASPKAGRDRAVTERGEPYQAQVELQETDPGPHLQHI. Basic and acidic residues predominate over residues 17-28; the sequence is AGRDRAVTERGE. In terms of domain architecture, Cyclin N-terminal spans 145–267; the sequence is EIFDEKLHPL…FLELLQFNIN (123 aa).

Belongs to the cyclin family. Cyclin Y subfamily.

It is found in the cell membrane. Functionally, key regulator of Wnt signaling implicated in various biological processes, such as embryonic neurogenesis. This Xenopus tropicalis (Western clawed frog) protein is Cyclin-Y-like protein 1 (ccnyl1).